Here is a 497-residue protein sequence, read N- to C-terminus: MASEENNDLENLLDIQLIEQKESLSSIDEALLSDPSNPELLSVHEELLSAIKEVEEGLLHLKRARLLEEADIVLNGLNHDAGVKPEHLEPEKTEEKKDLDGSKCRFRHTDGRWYNGRIIGFEGSDSAKISFLTPTSESMMICKFFMQQRCRFGSSCRSSHGLDVPISSLKNYEQTEWKQLMVGSKIWAVSGSKYDIWRKAELESWDDELQVGGVVFRDDKSSAKLGSDSLALSEYAQMTDDDGEEEEEEDEQQSASDSEDSVSSDYDEGSPQGIGFLESTNLPRGVQTDTALFAKWENHTRGIASKMMASMGYREGMGLGVSGQGILNPILVKVLPAKRSLDYALEHIRNGECKSEKQKKKRSRGGKRKRGKKFAEAAKAAKQEEESKPDLFSLINEQIFPTRHEKVHSESVKNRQNKGPVDRKALVEYQDEVRDLKLEMLKLEQMVNRNKKDLVVSEAATRRLKEVRKALASTLACQAAASNAIVSKENEKKWLKF.

Residues Ser136 to Asp163 form a C3H1-type zinc finger. The interval Ala236–Asn281 is disordered. A compositionally biased stretch (acidic residues) spans Thr239–Glu268. The 47-residue stretch at Thr300–Glu346 folds into the G-patch domain. The disordered stretch occupies residues Glu352 to Ser387. The segment covering Lys357–Lys372 has biased composition (basic residues). Over residues Lys373–Ser387 the composition is skewed to basic and acidic residues.

In Arabidopsis thaliana (Mouse-ear cress), this protein is Zinc finger CCCH domain-containing protein 22.